Consider the following 157-residue polypeptide: Ribonuclease H (157 aa).

The RNase H type-1 domain maps to 1–146 (MPDLFAYTDG…ADELARAGMA (146 aa)). Mg(2+) contacts are provided by Asp-9, Glu-52, Asp-74, and Asp-138.

This sequence belongs to the RNase H family. In terms of assembly, monomer. Mg(2+) is required as a cofactor.

It localises to the cytoplasm. It carries out the reaction Endonucleolytic cleavage to 5'-phosphomonoester.. In terms of biological role, endonuclease that specifically degrades the RNA of RNA-DNA hybrids. In Ruegeria sp. (strain TM1040) (Silicibacter sp.), this protein is Ribonuclease H.